A 50-amino-acid polypeptide reads, in one-letter code: Acidic phospholipase A2 1 (50 aa).

Ca(2+)-binding residues include Tyr27, Gly29, and Gly31. An intrachain disulfide couples Cys28 to Cys44. Residue His47 is part of the active site. A Ca(2+)-binding site is contributed by Asp48.

It belongs to the phospholipase A2 family. Group II subfamily. D49 sub-subfamily. As to quaternary structure, monomer. It depends on Ca(2+) as a cofactor. In terms of tissue distribution, expressed by the venom gland.

The protein localises to the secreted. The catalysed reaction is a 1,2-diacyl-sn-glycero-3-phosphocholine + H2O = a 1-acyl-sn-glycero-3-phosphocholine + a fatty acid + H(+). Its function is as follows. Snake venom phospholipase A2 (PLA2) that displays a potent enzymatic activity as measured by indirect hemolysis of red blood cells. Is neither lethal when injected into mice nor does it present anticoagulant activity. Displays a moderate inhibitory activity on the aggregation of platelets induced by low levels of ADP, thrombin and arachidonate. In contrast, strongly inhibits platelet aggregation induced by high doses of collagen. Shows myotoxic activity, increases the plasma creatine-kinase activity and induces edema and myonecrosis of mouse skeletal muscles. PLA2 catalyzes the calcium-dependent hydrolysis of the 2-acyl groups in 3-sn-phosphoglycerides. The chain is Acidic phospholipase A2 1 from Lachesis muta muta (Bushmaster).